Here is a 709-residue protein sequence, read N- to C-terminus: Frizzled-6 (709 aa).

A signal peptide spans 1 to 18 (MERSPFLLACILLPLVRG). Residues 19–132 (HSLFTCEPIT…CNRLPHCDDT (114 aa)) form the FZ domain. The Extracellular portion of the chain corresponds to 19 to 201 (HSLFTCEPIT…SDELDFAKSF (183 aa)). 5 disulfide bridges follow: C24-C85, C32-C78, C69-C106, C95-C129, and C99-C123. N38 carries N-linked (GlcNAc...) asparagine glycosylation. A helical transmembrane segment spans residues 202–222 (IGIVSIFCLCATLFTFLTFLI). Residues 223-233 (DVRRFRYPERP) lie on the Cytoplasmic side of the membrane. The helical transmembrane segment at 234–254 (IIYYSVCYSIVSLMYFVGFLL) threads the bilayer. Residues 255–284 (GNSTACNKADEKLELGDTVVLGSKNKACSV) are Extracellular-facing. N256 is a glycosylation site (N-linked (GlcNAc...) asparagine). The chain crosses the membrane as a helical span at residues 285 to 305 (VFMFLYFFTMAGTVWWVILTI). Residues 306 to 324 (TWFLAAGRKWSCEAIEQKA) lie on the Cytoplasmic side of the membrane. Residues 325 to 345 (VWFHAVAWGAPGFLTVMLLAM) traverse the membrane as a helical segment. Residues 346-370 (NKVEGDNISGVCFVGLYDLDASRYF) are Extracellular-facing. N352 is a glycosylation site (N-linked (GlcNAc...) asparagine). A helical transmembrane segment spans residues 371 to 391 (VLLPLCLCVFVGLSLLLAGII). Over 392–416 (SLNHVRQVIQHDGRNQEKLKKFMIR) the chain is Cytoplasmic. A helical membrane pass occupies residues 417–437 (IGVFSGLYLVPLVTLLGCYVY). Topologically, residues 438–473 (ELVNRITWEMTWFSDHCHQYRIPCPYQANPKARPEL) are extracellular. Residues 474 to 494 (ALFMIKYLMTLIVGISAVFWV) form a helical membrane-spanning segment. The Cytoplasmic segment spans residues 495–709 (GSKKTCTEWA…EQGAGSHSDA (215 aa)). The Lys-Thr-X-X-X-Trp motif, mediates interaction with the PDZ domain of Dvl family members signature appears at 498 to 503 (KTCTEW). A compositionally biased stretch (polar residues) spans 583 to 594 (QETSTEVHTSPE). The interval 583-709 (QETSTEVHTS…EQGAGSHSDA (127 aa)) is disordered. Positions 596–616 (SVKEGRADRANTPSAKDRDCG) are enriched in basic and acidic residues. Residues 620 to 629 (GPSSKLSGNR) are compositionally biased toward polar residues. Residues 630–644 (NGRESRAGGLKERSN) are compositionally biased toward basic and acidic residues. S656 carries the post-translational modification Phosphoserine. Positions 669–690 (CSTSQAASSPEPTSLKGSTSLP) are enriched in polar residues. A compositionally biased stretch (basic and acidic residues) spans 697–709 (ARKEQGAGSHSDA).

This sequence belongs to the G-protein coupled receptor Fz/Smo family. In terms of assembly, interacts with LMBR1L. Post-translationally, ubiquitinated by ZNRF3, leading to its degradation by the proteasome. Expressed in both hair cells and supporting cells in the utricle, saccule, cristae and the organ of Corti in the inner ear (at protein level).

It localises to the membrane. It is found in the cell membrane. Its subcellular location is the cell surface. The protein resides in the apical cell membrane. The protein localises to the cytoplasmic vesicle membrane. It localises to the endoplasmic reticulum membrane. Functionally, receptor for Wnt proteins. Most of frizzled receptors are coupled to the beta-catenin canonical signaling pathway, which leads to the activation of disheveled proteins, inhibition of GSK-3 kinase, nuclear accumulation of beta-catenin and activation of Wnt target genes. A second signaling pathway involving PKC and calcium fluxes has been seen for some family members, but it is not yet clear if it represents a distinct pathway or if it can be integrated in the canonical pathway, as PKC seems to be required for Wnt-mediated inactivation of GSK-3 kinase. Both pathways seem to involve interactions with G-proteins. Activation by Wnt5A stimulates PKC activity via a G-protein-dependent mechanism. Involved in transduction and intercellular transmission of polarity information during tissue morphogenesis and/or in differentiated tissues. Together with FZD3, is involved in the neural tube closure and plays a role in the regulation of the establishment of planar cell polarity (PCP), particularly in the orientation of asymmetric bundles of stereocilia on the apical faces of a subset of auditory and vestibular sensory cells located in the inner ear. This chain is Frizzled-6 (Fzd6), found in Mus musculus (Mouse).